A 36-amino-acid chain; its full sequence is Photosystem I reaction center subunit VIII (36 aa).

Residues proline 7–tyrosine 29 form a helical membrane-spanning segment.

Belongs to the PsaI family.

Its subcellular location is the plastid. It localises to the chloroplast thylakoid membrane. Its function is as follows. May help in the organization of the PsaL subunit. This Gracilaria tenuistipitata var. liui (Red alga) protein is Photosystem I reaction center subunit VIII.